The following is a 133-amino-acid chain: MRRMLLHLSVLTLSCVWATAMEIPMSTVVKETLTQLSAHRALLTSNETMRLPVPTHKNHQLCIGEIFQGLDILKNQTVRGGTVEMLFQNLSLIKKYIDRQKEKCGEERRRTRQFLDYLQEFLGVMSTEWAMEG.

The signal sequence occupies residues 1-20 (MRRMLLHLSVLTLSCVWATA). 3 N-linked (GlcNAc...) asparagine glycosylation sites follow: N46, N75, and N89.

This sequence belongs to the IL-5 family. Homodimer; disulfide-linked. Interacts with IL5RA. Interacts with CSF2RB. As to expression, expressed in lymphoid cells, including spleen, thymus, lymph nodes and peripheral blood mononuclear cells.

It localises to the secreted. Homodimeric cytokine expressed predominantly by T-lymphocytes and NK cells that plays an important role in the survival, differentiation, and chemotaxis of eosinophils. Also acts on activated and resting B-cells to induce immunoglobulin production, growth, and differentiation. Mechanistically, exerts its biological effects through a receptor composed of IL5RA subunit and the cytokine receptor common subunit beta/CSF2RB. Binding to the receptor leads to activation of various kinases including LYN, SYK and JAK2 and thereby propagates signals through the RAS-MAPK and JAK-STAT5 pathways respectively. This Mus musculus (Mouse) protein is Interleukin-5 (Il5).